The following is a 142-amino-acid chain: Large ribosomal subunit protein uL11 (142 aa).

Belongs to the universal ribosomal protein uL11 family. In terms of assembly, part of the ribosomal stalk of the 50S ribosomal subunit. Interacts with L10 and the large rRNA to form the base of the stalk. L10 forms an elongated spine to which L12 dimers bind in a sequential fashion forming a multimeric L10(L12)X complex. Post-translationally, one or more lysine residues are methylated.

In terms of biological role, forms part of the ribosomal stalk which helps the ribosome interact with GTP-bound translation factors. The sequence is that of Large ribosomal subunit protein uL11 from Rhodopseudomonas palustris (strain HaA2).